A 144-amino-acid polypeptide reads, in one-letter code: Large ribosomal subunit protein uL11 (144 aa).

It belongs to the universal ribosomal protein uL11 family. As to quaternary structure, part of the ribosomal stalk of the 50S ribosomal subunit. Interacts with L10 and the large rRNA to form the base of the stalk. L10 forms an elongated spine to which L12 dimers bind in a sequential fashion forming a multimeric L10(L12)X complex. In terms of processing, one or more lysine residues are methylated.

Its function is as follows. Forms part of the ribosomal stalk which helps the ribosome interact with GTP-bound translation factors. The polypeptide is Large ribosomal subunit protein uL11 (Frankia alni (strain DSM 45986 / CECT 9034 / ACN14a)).